A 732-amino-acid polypeptide reads, in one-letter code: Elongation factor 2 (732 aa).

Residues 19–260 enclose the tr-type G domain; the sequence is ERIRNIGIAA…MVVRHLPSPI (242 aa). GTP is bound by residues 28–35, 94–98, and 148–151; these read AHIDHGKT, DTPGH, and NKVD. His597 is subject to Diphthamide.

It belongs to the TRAFAC class translation factor GTPase superfamily. Classic translation factor GTPase family. EF-G/EF-2 subfamily.

The protein resides in the cytoplasm. Functionally, catalyzes the GTP-dependent ribosomal translocation step during translation elongation. During this step, the ribosome changes from the pre-translocational (PRE) to the post-translocational (POST) state as the newly formed A-site-bound peptidyl-tRNA and P-site-bound deacylated tRNA move to the P and E sites, respectively. Catalyzes the coordinated movement of the two tRNA molecules, the mRNA and conformational changes in the ribosome. This is Elongation factor 2 (fusA) from Pyrococcus horikoshii (strain ATCC 700860 / DSM 12428 / JCM 9974 / NBRC 100139 / OT-3).